The following is a 111-amino-acid chain: DNA-binding protein AF_2068 (111 aa).

It belongs to the PDCD5 family.

This Archaeoglobus fulgidus (strain ATCC 49558 / DSM 4304 / JCM 9628 / NBRC 100126 / VC-16) protein is DNA-binding protein AF_2068.